Consider the following 300-residue polypeptide: Peptidyl-prolyl cis-trans isomerase E (300 aa).

The RRM domain occupies 6-84 (RTIYVGGLAD…RTIRVNLAKP (79 aa)). In terms of domain architecture, PPIase cyclophilin-type spans 142-298 (FFDIRIGGND…QKIVIYSCGE (157 aa)).

The protein belongs to the cyclophilin-type PPIase family. PPIase E subfamily.

Its subcellular location is the nucleus. The enzyme catalyses [protein]-peptidylproline (omega=180) = [protein]-peptidylproline (omega=0). In terms of biological role, PPIases accelerate the folding of proteins. It catalyzes the cis-trans isomerization of proline imidic peptide bonds in oligopeptides. Combines RNA-binding and PPIase activities. This is Peptidyl-prolyl cis-trans isomerase E (cyp33) from Drosophila melanogaster (Fruit fly).